Reading from the N-terminus, the 406-residue chain is Succinylornithine transaminase (406 aa).

K252 is modified (N6-(pyridoxal phosphate)lysine).

Belongs to the class-III pyridoxal-phosphate-dependent aminotransferase family. AstC subfamily. Pyridoxal 5'-phosphate serves as cofactor.

The catalysed reaction is N(2)-succinyl-L-ornithine + 2-oxoglutarate = N-succinyl-L-glutamate 5-semialdehyde + L-glutamate. It functions in the pathway amino-acid degradation; L-arginine degradation via AST pathway; L-glutamate and succinate from L-arginine: step 3/5. In terms of biological role, catalyzes the transamination of N(2)-succinylornithine and alpha-ketoglutarate into N(2)-succinylglutamate semialdehyde and glutamate. Can also act as an acetylornithine aminotransferase. The protein is Succinylornithine transaminase of Shigella boydii serotype 18 (strain CDC 3083-94 / BS512).